The primary structure comprises 1465 residues: DNA polymerase III PolC-type (1465 aa).

The Exonuclease domain occupies 427–583 (YVVFDVETTG…YDAEATGRLL (157 aa)).

This sequence belongs to the DNA polymerase type-C family. PolC subfamily.

It localises to the cytoplasm. The enzyme catalyses DNA(n) + a 2'-deoxyribonucleoside 5'-triphosphate = DNA(n+1) + diphosphate. Required for replicative DNA synthesis. This DNA polymerase also exhibits 3' to 5' exonuclease activity. The polypeptide is DNA polymerase III PolC-type (Streptococcus pyogenes serotype M6 (strain ATCC BAA-946 / MGAS10394)).